Consider the following 299-residue polypeptide: MTKRTLYELQAENVRKTYLFIVLFSLILFAVGYFFVWYFNWGITGIIFLAIFIVLYNWIAYEQSDKIALTSVGAVPADPEKFYVLHNIVEEVALAAGVPKPKVYVMNEPQPNAFATGKDPKHASICVTTGLLQMMNREELQGVIAHEMSHIRNRDILLMTVVAIVAGLIILLRDVFLRSMWWGIGGERRRDKNDNLGIILLLIGLILSIIAPIVVLIIRSAISRQREYLADATGAYIVRDPYGLASALEKIGNYTRPMRTASSATAHMFISNPFGKVEYLFATHPPIEERIKRLKSLTI.

2 helical membrane passes run 19–39 (LFIV…VWYF) and 41–61 (WGIT…WIAY). Residue His146 coordinates Zn(2+). Glu147 is an active-site residue. His150 serves as a coordination point for Zn(2+). 2 helical membrane passes run 156 to 176 (ILLM…RDVF) and 198 to 218 (IILL…VLII). Glu227 contacts Zn(2+).

Belongs to the peptidase M48B family. Requires Zn(2+) as cofactor.

It localises to the cell membrane. This is Protease HtpX homolog from Caldanaerobacter subterraneus subsp. tengcongensis (strain DSM 15242 / JCM 11007 / NBRC 100824 / MB4) (Thermoanaerobacter tengcongensis).